The primary structure comprises 1543 residues: ATP-binding cassette sub-family A member 10 (1543 aa).

The next 7 helical transmembrane spans lie at 83–103 (YWLKGFVAFQAAINAAIIEVT), 135–155 (WFHFTCLVSFSSFIYFASLNV), 185–205 (ICFIFIMSIFMALVITSIPIV), 210–230 (FMVIFTLYSLYGLSLIALAFL), 240–260 (LAGLAGFLFTVFWGCLGFTVL), 264–284 (LPLSLGWVLSLLSPFAFTAGM), and 310–330 (IATFFILAFDTLFYLIFTLYF). The ABC transporter 1 domain maps to 391-626 (IRIRNVIKEY…WGIGYHLSLH (236 aa)). ATP is bound at residue 427-434 (GHNGAGKS). Helical transmembrane passes span 774–794 (LLCLLLVLGIAFIPIILEKIM), 890–910 (LNCFPVLMGIVSNALMGIFNF), 926–946 (IVLDLGFIDGSIFLLLITNCV), 985–1005 (IPLYFLILFSIHLIYYFIFLG), 1014–1034 (FVLVVCIIGCAVSLIFLTYVL), 1046–1066 (GFWSFGFFIILICVSTIMVST), 1073–1093 (LILCMIFIPSFTLLGYVMLLI), and 1113–1133 (KTILLTTLIPYLQSVIFLFVI). The span at 1153-1164 (ISPRSRETHPNP) shows a compositional bias: basic and acidic residues. Residues 1153–1177 (ISPRSRETHPNPEEPEEEDEDVQAE) are disordered. Residues 1165–1174 (EEPEEEDEDV) are compositionally biased toward acidic residues. The region spanning 1206–1440 (YETKKSCFST…FGRDYLLEIK (235 aa)) is the ABC transporter 2 domain. 1239-1246 (GHNGAGKS) contributes to the ATP binding site.

It belongs to the ABC transporter superfamily. ABCA family. As to expression, widely expressed. Highly expressed in skeletal muscle, heart, brain and gastrointestinal tract.

The protein localises to the membrane. Its function is as follows. Probable transporter which may play a role in macrophage lipid transport and homeostasis. This chain is ATP-binding cassette sub-family A member 10 (ABCA10), found in Homo sapiens (Human).